A 334-amino-acid polypeptide reads, in one-letter code: Phospho-N-acetylmuramoyl-pentapeptide-transferase (334 aa).

10 consecutive transmembrane segments (helical) span residues isoleucine 2–valine 22, valine 55–valine 75, glycine 78–methionine 98, glutamate 116–leucine 136, glycine 154–alanine 174, glycine 187–methionine 207, tryptophan 211–phenylalanine 231, valine 236–isoleucine 256, phenylalanine 262–isoleucine 282, and valine 311–lysine 331.

This sequence belongs to the glycosyltransferase 4 family. MraY subfamily. It depends on Mg(2+) as a cofactor.

It is found in the cell membrane. It carries out the reaction UDP-N-acetyl-alpha-D-muramoyl-L-alanyl-gamma-D-glutamyl-meso-2,6-diaminopimeloyl-D-alanyl-D-alanine + di-trans,octa-cis-undecaprenyl phosphate = di-trans,octa-cis-undecaprenyl diphospho-N-acetyl-alpha-D-muramoyl-L-alanyl-D-glutamyl-meso-2,6-diaminopimeloyl-D-alanyl-D-alanine + UMP. It functions in the pathway cell wall biogenesis; peptidoglycan biosynthesis. In terms of biological role, catalyzes the initial step of the lipid cycle reactions in the biosynthesis of the cell wall peptidoglycan: transfers peptidoglycan precursor phospho-MurNAc-pentapeptide from UDP-MurNAc-pentapeptide onto the lipid carrier undecaprenyl phosphate, yielding undecaprenyl-pyrophosphoryl-MurNAc-pentapeptide, known as lipid I. This chain is Phospho-N-acetylmuramoyl-pentapeptide-transferase, found in Desulforudis audaxviator (strain MP104C).